The chain runs to 152 residues: Protein SprT-like (152 aa).

The SprT-like domain occupies 7 to 147 (QRLVEEVSLQ…CGKCKGKLKP (141 aa)). His-67 contributes to the Zn(2+) binding site. Glu-68 is an active-site residue. His-71 contributes to the Zn(2+) binding site.

It belongs to the SprT family. The cofactor is Zn(2+).

The protein resides in the cytoplasm. The protein is Protein SprT-like of Bacillus cereus (strain B4264).